A 644-amino-acid chain; its full sequence is Zinc finger protein 568 (644 aa).

The KRAB domain maps to 48–119 (VTFKDVAVDL…EEEMFGRHCP (72 aa)). C2H2-type zinc fingers lie at residues 222 to 244 (FKCN…ERIH), 250 to 272 (YECK…QKIH), 278 to 300 (YKCN…HRIH), 306 to 328 (YACK…ERIH), 334 to 356 (YECK…EKIH), 362 to 384 (YACN…MRSH), 390 to 412 (YKCN…MRSH), 418 to 440 (YVCS…MRNH), 446 to 468 (YECK…QKIH), 474 to 496 (YECS…QRIH), 502 to 524 (YACT…EKIH), 530 to 552 (YHCN…EKIH), 558 to 580 (FKCN…VRSH), 586 to 608 (YECN…MRSH), and 614 to 636 (FECN…KRGH).

This sequence belongs to the krueppel C2H2-type zinc-finger protein family. In terms of assembly, interacts with TRIM28.

The protein localises to the nucleus. Its function is as follows. Has transcriptional repression activity, partially through the recruitment of the corepressor TRIM28 but also has repression activity independently of this interaction. Essential during embryonic development, where it acts as a direct repressor of a placental-specific transcript of IGF2 in early development and regulates convergent extension movements required for axis elongation and tissue morphogenesis in all germ layers. Also important for normal morphogenesis of extraembryonic tissues including the yolk sac, extraembryonic mesoderm and placenta. May enhance proliferation or maintenance of neural stem cells. The sequence is that of Zinc finger protein 568 (ZNF568) from Homo sapiens (Human).